A 387-amino-acid chain; its full sequence is Succinate--CoA ligase [ADP-forming] subunit beta (387 aa).

In terms of domain architecture, ATP-grasp spans 9 to 244; it reads KQLFAEYGIP…KTQEDETEVL (236 aa). ATP-binding positions include Lys-46, 53–55, Gly-102, and Glu-107; that span reads GRG. 2 residues coordinate Mg(2+): Asn-199 and Asp-213. Substrate contacts are provided by residues Asn-264 and 321–323; that span reads GIV.

It belongs to the succinate/malate CoA ligase beta subunit family. Heterotetramer of two alpha and two beta subunits. It depends on Mg(2+) as a cofactor.

The catalysed reaction is succinate + ATP + CoA = succinyl-CoA + ADP + phosphate. It catalyses the reaction GTP + succinate + CoA = succinyl-CoA + GDP + phosphate. Its pathway is carbohydrate metabolism; tricarboxylic acid cycle; succinate from succinyl-CoA (ligase route): step 1/1. Functionally, succinyl-CoA synthetase functions in the citric acid cycle (TCA), coupling the hydrolysis of succinyl-CoA to the synthesis of either ATP or GTP and thus represents the only step of substrate-level phosphorylation in the TCA. The beta subunit provides nucleotide specificity of the enzyme and binds the substrate succinate, while the binding sites for coenzyme A and phosphate are found in the alpha subunit. In Xylella fastidiosa (strain 9a5c), this protein is Succinate--CoA ligase [ADP-forming] subunit beta.